The primary structure comprises 433 residues: MLSYKKVLIVGRPNVGKSALFNRILDTKRSITENTYGVTRDLVEEVCKVGSFKFKLIDTGGFTILKDEISKIVVQKVLSSLEKVDLILLVLDVNEILLEDYQIIERLRKYSNKVILVLNKVDAKDKEFLAHEFHNLGFKRCFLVSAVHCRGIAKLRDFLKVEVGEANIEDEVNIKVGIIGKPNSGKSTLINYLSGNEISIVSDKPGTTRDFIKTKLTRNGKVFEIIDTAGIRRRARVNEIVEYYSVNRALKVIDMVDIVFLLIDVKEELTSQDKKIAHYVTKKGKGIIIVFSKWDLVKESKGYFEALKSRVKFFFPVLNFAPIFRISVHKKIGLDSLFKEAFKLKDQLEFKTSTPDLNKMLNLWIKDYHLNVSHKIKYITQVSANPVRFILFANKIKNFPNSYYNYLVNNLRKIGYNNIPILVELREKIRDLK.

EngA-type G domains lie at 5-167 (KKVL…GEAN) and 174-349 (IKVG…DQLE). GTP contacts are provided by residues 11-18 (GRPNVGKS), 58-62 (DTGGF), 119-122 (NKVD), 180-187 (GKPNSGKS), 227-231 (DTAGI), and 292-295 (SKWD). The 80-residue stretch at 350–429 (FKTSTPDLNK…PILVELREKI (80 aa)) folds into the KH-like domain.

This sequence belongs to the TRAFAC class TrmE-Era-EngA-EngB-Septin-like GTPase superfamily. EngA (Der) GTPase family. In terms of assembly, associates with the 50S ribosomal subunit.

GTPase that plays an essential role in the late steps of ribosome biogenesis. The chain is GTPase Der from Borreliella afzelii (strain PKo) (Borrelia afzelii).